The chain runs to 991 residues: Mediator of RNA polymerase II transcription subunit 5 (991 aa).

The protein belongs to the Mediator complex subunit 5 family. As to quaternary structure, component of the Mediator complex.

It is found in the nucleus. In terms of biological role, component of the Mediator complex, a coactivator involved in the regulated transcription of nearly all RNA polymerase II-dependent genes. Mediator functions as a bridge to convey information from gene-specific regulatory proteins to the basal RNA polymerase II transcription machinery. Mediator is recruited to promoters by direct interactions with regulatory proteins and serves as a scaffold for the assembly of a functional preinitiation complex with RNA polymerase II and the general transcription factors. The chain is Mediator of RNA polymerase II transcription subunit 5 (NUT1) from Yarrowia lipolytica (strain CLIB 122 / E 150) (Yeast).